Consider the following 382-residue polypeptide: G-box-binding factor 3 (382 aa).

Residues 1–16 (MGNSSEEPKPPTKSDK) are compositionally biased toward basic and acidic residues. Disordered regions lie at residues 1-26 (MGNSSEEPKPPTKSDKPSSPPVDQTN), 97-221 (MGSL…GVKL), and 257-285 (ERELKRERRKQSNRESARRSRLRKQAETE). Positions 111 to 130 (TPGTLLSIDTPTKSTGNTDN) are enriched in polar residues. A compositionally biased stretch (basic and acidic residues) spans 155–165 (ADEHKRSRNSS). Positions 166–181 (ETDGSTDGSDGNTTGA) are enriched in low complexity. Over residues 182–199 (DEPKLKRSREGTPTKDGK) the composition is skewed to basic and acidic residues. Over residues 202 to 216 (VQASSFHSVSPSSGD) the composition is skewed to polar residues. The bZIP domain maps to 259–322 (ELKRERRKQS…DKLRGANATL (64 aa)). Positions 261–280 (KRERRKQSNRESARRSRLRK) are basic motif. The leucine-zipper stretch occupies residues 287 to 322 (LARKVEALTAENMALRSELNQLNEKSDKLRGANATL). Positions 329-382 (SEPEKRVPANMLSRVKNSGAGDKNKNQGDNDSNSTSKLHQLLDTKPRAKAVAAG) are disordered. The segment covering 357 to 366 (DNDSNSTSKL) has biased composition (polar residues).

This sequence belongs to the bZIP family. In terms of assembly, DNA-binding heterodimer. Interacts with GBF4. Interacts with BZIP16 and BZIP68. Present only in dark grown leaves and roots.

It is found in the nucleus. Functionally, binds to the G-box motif (5'-CCACGTGG-3') of the rbcS-1A gene promoter. G-box and G-box-like motifs are cis-acting elements defined in promoters of certain plant genes which are regulated by such diverse stimuli as light-induction or hormone control. The chain is G-box-binding factor 3 (GBF3) from Arabidopsis thaliana (Mouse-ear cress).